The chain runs to 62 residues: Alpha-conotoxin-like Ca1.1 (62 aa).

An N-terminal signal peptide occupies residues 1–21 (MGMRMMFTVFLLVVLATTVVS). The propeptide occupies 22–46 (FTSDRASDGRNAAANAFDLIALIAR). Gln-47 is modified (pyrrolidone carboxylic acid). Disulfide bonds link Cys-49–Cys-55 and Cys-50–Cys-61.

The protein belongs to the conotoxin A superfamily. Expressed by the venom duct.

It localises to the secreted. In terms of biological role, alpha-conotoxins act on postsynaptic membranes, they bind to the nicotinic acetylcholine receptors (nAChR) and thus inhibit them. This Conus caracteristicus (Characteristic cone) protein is Alpha-conotoxin-like Ca1.1.